Reading from the N-terminus, the 781-residue chain is Catenin beta-1 (781 aa).

Ala2 carries the N-acetylalanine modification. Positions 2–23 are interaction with VCL; that stretch reads ATQADLMELDMAMEPDRKAAVS. Position 23 is a phosphoserine; by GSK3-beta; alternate (Ser23). Ser23 carries O-linked (GlcNAc) serine; alternate glycosylation. Phosphoserine; by GSK3-beta is present on Ser29. 2 positions are modified to phosphoserine; by GSK3-beta and HIPK2: Ser33 and Ser37. The disordered stretch occupies residues 34–57; it reads GIHSGATTTAPSLSGKGNPEEEDV. Thr41 carries the post-translational modification Phosphothreonine; by GSK3-beta. Position 45 is a phosphoserine (Ser45). Lys49 carries the post-translational modification N6-acetyllysine. Residue Tyr64 is modified to Phosphotyrosine; by PTK6. A Phosphotyrosine; by FYN and PTK6 modification is found at Tyr142. 12 ARM repeats span residues 151–191, 193–234, 235–276, 277–318, 319–360, 361–389, 400–441, 442–484, 489–530, 531–571, 594–636, and 637–666; these read RAIP…IMRS, QMVS…IFKS, GGIP…VRLA, GGLQ…ILAS, GGPQ…IVEA, GGMQ…RNLS, GLLG…VCQV, GGIE…AQNA, YGLP…LREQ, GAIP…EIVE, NTIP…AEGA, and TAPL…SEDK. Residues 156 to 178 are interaction with BCL9; it reads LTKLLNDEDQVVVNKAAVMVHQL. Ser191 carries the phosphoserine; by CDK5 modification. Residue Ser246 is modified to Phosphoserine; by CDK5. Tyr331 carries the post-translational modification Phosphotyrosine; by PTK6. Tyr333 bears the Phosphotyrosine; by SRC and PTK6 mark. Ser552 is modified (phosphoserine). A (Microbial infection) Phosphothreonine modification is found at Thr556. Thr556 is subject to Phosphothreonine. Cys619 carries the S-nitrosocysteine modification. The residue at position 675 (Ser675) is a Phosphoserine. The segment at 705-781 is disordered; the sequence is EPLGYRQDDP…NQLAWFDTDL (77 aa). Over residues 734-745 the composition is skewed to basic and acidic residues; that stretch reads MMEHEMGGHHPG. The tract at residues 772–781 is interaction with SCRIB; it reads NQLAWFDTDL.

It belongs to the beta-catenin family. In terms of assembly, two separate complex-associated pools are found in the cytoplasm. The majority is present as component of an E-cadherin:catenin adhesion complex composed of at least E-cadherin/CDH1 and beta-catenin/CTNNB1, and possibly alpha-catenin/CTNNA1; the complex is located to adherens junctions. The stable association of CTNNA1 is controversial as CTNNA1 was shown not to bind to F-actin when assembled in the complex. Alternatively, the CTNNA1-containing complex may be linked to F-actin by other proteins such as LIMA1. Another cytoplasmic pool is part of a large complex containing AXIN1, AXIN2, APC, CSNK1A1 and GSK3B that promotes phosphorylation on N-terminal Ser and Thr residues and ubiquitination of CTNNB1 via BTRC and its subsequent degradation by the proteasome. Wnt-dependent activation of DVL antagonizes the action of GSK3B. When GSK3B activity is inhibited the complex dissociates, CTNNB1 is dephosphorylated and is no longer targeted for destruction. The stabilized protein translocates to the nucleus, where it binds TCF/LEF-1 family members, BCL9, BCL9L and possibly also RUVBL1 and CHD8. Binds CTNNBIP and EP300. CTNNB1 forms a ternary complex with LEF1 and EP300 that is disrupted by CTNNBIP1 binding. Interacts with TAX1BP3 (via the PDZ domain); this interaction inhibits the transcriptional activity of CTNNB1. Interacts with AJAP1, BAIAP1, CARM1, CTNNA3, CXADR and PCDH11Y. Binds NHERF1. Interacts with GLIS2 and MUC1. Interacts with SLC30A9. Interacts with XIRP1. Interacts directly with AXIN1; the interaction is regulated by CDK2 phosphorylation of AXIN1. Interacts with SCRIB. Interacts with RAPGEF2. Interacts with PTPRU (via the cytoplasmic juxtamembrane domain). Interacts with EMD. Interacts with TNIK and TCF7L2. Interacts with SESTD1 and TRPC4. Interacts with CAV1. Interacts with TRPV4. The TRPV4 and CTNNB1 complex can interact with CDH1. Interacts with VCL. Interacts with PTPRJ. Interacts with PKT7 and CDK2. Interacts with FAT1 (via the cytoplasmic domain). Interacts with NANOS1 and NDRG2. Interacts with isoform 1 of NEK2. Interacts with both isoform 1 and isoform 2 of CDK5. Interacts with PTK6. Interacts with SOX7; this interaction may lead to proteasomal degradation of active CTNNB1 and thus inhibition of Wnt/beta-catenin-stimulated transcription. Identified in a complex with HINT1 and MITF. Interacts with FHIT. The CTNNB1 and TCF7L2/TCF4 complex interacts with PML (isoform PML-4). Interacts with FERMT2. Identified in a complex with TCF7L2/TCF4 and FERMT2. Interacts with RORA. May interact with P-cadherin/CDH3. Interacts with RNF220. Interacts with CTNND2. Interacts (via the C-terminal region) with CBY1. The complex composed, at least, of APC, CTNNB1 and GSK3B interacts with JPT1; the interaction requires the inactive form of GSK3B (phosphorylated at 'Ser-9'). Interacts with DLG5. Interacts with FAM53B; promoting translocation to the nucleus. Interacts with TMEM170B. Interacts with AHI1. Interacts with GID8. Component of an cadherin:catenin adhesion complex composed of at least of CDH26, beta-catenin/CTNNB1, alpha-catenin/CTNNA1 and p120 catenin/CTNND1. Forms a complex comprising APPL1, RUVBL2, APPL2, HDAC1 and HDAC2. Interacts with IRF2BPL; mediates the ubiquitination and degradation of CTNNB1. Interacts with AMFR. Interacts with LMBR1L. Interacts with SOX30; prevents interaction of CTNNB1 with TCF7L2/TCF4 and leads to inhibition of Wnt signaling. Interacts with SOX9; inhibiting CTNNB1 activity by competing with the binding sites of TCF/LEF within CTNNB1, thereby inhibiting the Wnt signaling. Interacts with SPN/CD43 cytoplasmic tail. Interacts (when phosphorylated at Tyr-333) with isoform M2 of PKM (PKM2); promoting transcription activation. Interacts with PKP2 (via HEAD domain). Interacts with CDH1. Interacts (when unphosphorylated) with FLYWCH1, perhaps preventing interaction of CTNNB1 with TCF4, and thereby regulating transcription activation; phosphorylation of CTNNB1 may inhibit the interaction. Interacts (via the central armadillo domains) with probable transcriptional regulator ADNP (via N-terminal region); interaction is direct and stabilizes CTNNB1 by modulating its phosphorylation by glycogen synthase kinase-3 beta GSK3B. Interacts with NR5A2. Interacts with DSG2; the interaction promotes localization of CTNNB1 at cell junctions thus reducing its nuclear localization and subsequent transcription of CTNNB1/TCF-target genes. As to quaternary structure, (Microbial infection) Interacts with herpes virus 8 protein vPK; this interaction inhibits the Wnt signaling pathway. Phosphorylation at Ser-552 by AMPK promotes stabilization of the protein, enhancing TCF/LEF-mediated transcription. Phosphorylation by GSK3B requires prior phosphorylation of Ser-45 by another kinase. Phosphorylation proceeds then from Thr-41 to Ser-37 and Ser-33. Phosphorylated by NEK2. EGF stimulates tyrosine phosphorylation. Phosphorylated on Ser-33 and Ser-37 by HIPK2 and GSK3B, this phosphorylation triggers proteasomal degradation. Phosphorylation on Ser-191 and Ser-246 by CDK5. Phosphorylation by CDK2 regulates insulin internalization. Phosphorylation by PTK6 at Tyr-64, Tyr-142, Tyr-331 and/or Tyr-333 with the predominant site at Tyr-64 is not essential for inhibition of transcriptional activity. Phosphorylation by SRC at Tyr-333 promotes interaction with isoform M2 of PKM (PKM2); promoting transcription activation. Post-translationally, ubiquitinated by the SCF(BTRC) E3 ligase complex when phosphorylated by GSK3B, leading to its degradation. Ubiquitinated by a E3 ubiquitin ligase complex containing UBE2D1, SIAH1, CACYBP/SIP, SKP1, APC and TBL1X, leading to its subsequent proteasomal degradation. Ubiquitinated and degraded following interaction with SOX9. Ubiquitinated via 'Lys-11'- and 'Lys-29'-linked ubiquitin chains by UBR5, leading to its stabilization. In terms of processing, S-nitrosylation at Cys-619 within adherens junctions promotes VEGF-induced, NO-dependent endothelial cell permeability by disrupting interaction with E-cadherin, thus mediating disassembly adherens junctions. O-glycosylation at Ser-23 decreases nuclear localization and transcriptional activity, and increases localization to the plasma membrane and interaction with E-cadherin CDH1. Post-translationally, deacetylated at Lys-49 by SIRT1. In terms of processing, phosphorylated at Thr-556 by herpes virus 1/HHV-1 leading to CTNNB1 inhibition. As to expression, expressed in several hair follicle cell types: basal and peripheral matrix cells, and cells of the outer and inner root sheaths. Expressed in colon. Present in cortical neurons (at protein level). Expressed in breast cancer tissues (at protein level).

The protein localises to the cytoplasm. Its subcellular location is the nucleus. It is found in the cytoskeleton. The protein resides in the cell junction. It localises to the adherens junction. The protein localises to the cell membrane. Its subcellular location is the microtubule organizing center. It is found in the centrosome. The protein resides in the spindle pole. It localises to the synapse. The protein localises to the cilium basal body. In terms of biological role, key downstream component of the canonical Wnt signaling pathway. In the absence of Wnt, forms a complex with AXIN1, AXIN2, APC, CSNK1A1 and GSK3B that promotes phosphorylation on N-terminal Ser and Thr residues and ubiquitination of CTNNB1 via BTRC and its subsequent degradation by the proteasome. In the presence of Wnt ligand, CTNNB1 is not ubiquitinated and accumulates in the nucleus, where it acts as a coactivator for transcription factors of the TCF/LEF family, leading to activate Wnt responsive genes. Also acts as a coactivator for other transcription factors, such as NR5A2. Promotes epithelial to mesenchymal transition/mesenchymal to epithelial transition (EMT/MET) via driving transcription of CTNNB1/TCF-target genes. Involved in the regulation of cell adhesion, as component of an E-cadherin:catenin adhesion complex. Acts as a negative regulator of centrosome cohesion. Involved in the CDK2/PTPN6/CTNNB1/CEACAM1 pathway of insulin internalization. Blocks anoikis of malignant kidney and intestinal epithelial cells and promotes their anchorage-independent growth by down-regulating DAPK2. Disrupts PML function and PML-NB formation by inhibiting RANBP2-mediated sumoylation of PML. Promotes neurogenesis by maintaining sympathetic neuroblasts within the cell cycle. Involved in chondrocyte differentiation via interaction with SOX9: SOX9-binding competes with the binding sites of TCF/LEF within CTNNB1, thereby inhibiting the Wnt signaling. Acts as a positive regulator of odontoblast differentiation during mesenchymal tooth germ formation, via promoting the transcription of differentiation factors such as LEF1, BMP2 and BMP4. Activity is repressed in a MSX1-mediated manner at the bell stage of mesenchymal tooth germ formation which prevents premature differentiation of odontoblasts. The sequence is that of Catenin beta-1 from Homo sapiens (Human).